The following is a 445-amino-acid chain: GTPase Der (445 aa).

EngA-type G domains follow at residues 3–167 and 180–353; these read PVIA…YAGQ and IKIA…AAAM. Residues 9 to 16, 56 to 60, 119 to 122, 186 to 193, 233 to 237, and 298 to 301 each bind GTP; these read GRPNVGKS, DTGGF, NKAE, DTAGL, and NKWD. Residues 354 to 438 enclose the KH-like domain; the sequence is AKLPTPKLTR…PLRIEFRSSN (85 aa).

The protein belongs to the TRAFAC class TrmE-Era-EngA-EngB-Septin-like GTPase superfamily. EngA (Der) GTPase family. In terms of assembly, associates with the 50S ribosomal subunit.

GTPase that plays an essential role in the late steps of ribosome biogenesis. The polypeptide is GTPase Der (Burkholderia lata (strain ATCC 17760 / DSM 23089 / LMG 22485 / NCIMB 9086 / R18194 / 383)).